The following is a 134-amino-acid chain: Phospholipase A2 (134 aa).

Residues Trp-8, Gly-10, and Gly-12 each contribute to the Ca(2+) site. 5 disulfide bridges follow: Cys-9-Cys-31, Cys-30-Cys-70, Cys-37-Cys-63, Cys-61-Cys-95, and Cys-105-Cys-113. Asn-13 carries N-linked (GlcNAc...) asparagine glycosylation. The active site involves His-34. Asp-35 contributes to the Ca(2+) binding site. The active site involves Asp-64.

Belongs to the phospholipase A2 family. Group III subfamily. It depends on Ca(2+) as a cofactor. As to expression, expressed by the venom gland.

It is found in the secreted. The catalysed reaction is a 1,2-diacyl-sn-glycero-3-phosphocholine + H2O = a 1-acyl-sn-glycero-3-phosphocholine + a fatty acid + H(+). Its function is as follows. PLA2 catalyzes the calcium-dependent hydrolysis of the 2-acyl groups in 3-sn-phosphoglycerides. The sequence is that of Phospholipase A2 from Apis dorsata (Giant honeybee).